We begin with the raw amino-acid sequence, 594 residues long: Alanine--tRNA ligase (594 aa).

Residues histidine 456, histidine 460, cysteine 558, and histidine 562 each coordinate Zn(2+).

It belongs to the class-II aminoacyl-tRNA synthetase family. Zn(2+) is required as a cofactor.

It is found in the cytoplasm. The catalysed reaction is tRNA(Ala) + L-alanine + ATP = L-alanyl-tRNA(Ala) + AMP + diphosphate. Catalyzes the attachment of alanine to tRNA(Ala) in a two-step reaction: alanine is first activated by ATP to form Ala-AMP and then transferred to the acceptor end of tRNA(Ala). Also edits incorrectly charged Ser-tRNA(Ala) and Gly-tRNA(Ala) via its editing domain. The chain is Alanine--tRNA ligase (alaS) from Borreliella afzelii (strain PKo) (Borrelia afzelii).